The sequence spans 210 residues: Phosphoribosyl-dephospho-CoA transferase (210 aa).

Residues Asp135 and Asp137 contribute to the active site.

This sequence belongs to the MdcG family.

The catalysed reaction is apo-[malonate decarboxylase ACP] + 2'-(5''-triphospho-alpha-D-ribosyl)-3'-dephospho-CoA = holo-[malonate decarboxylase ACP] + diphosphate. Functionally, transfers 2'-(5-triphosphoribosyl)-3'-dephosphocoenzyme-A to the apo-[acyl-carrier-protein] of the malonate decarboxylase to yield holo-[acyl-carrier-protein]. The polypeptide is Phosphoribosyl-dephospho-CoA transferase (Pseudomonas aeruginosa (strain ATCC 15692 / DSM 22644 / CIP 104116 / JCM 14847 / LMG 12228 / 1C / PRS 101 / PAO1)).